The following is a 371-amino-acid chain: UDP-N-acetylglucosamine--N-acetylmuramyl-(pentapeptide) pyrophosphoryl-undecaprenol N-acetylglucosamine transferase (371 aa).

Residues 10–12 (TGG), N124, R165, S197, I251, and Q296 each bind UDP-N-acetyl-alpha-D-glucosamine.

The protein belongs to the glycosyltransferase 28 family. MurG subfamily.

It is found in the cell membrane. The catalysed reaction is di-trans,octa-cis-undecaprenyl diphospho-N-acetyl-alpha-D-muramoyl-L-alanyl-D-glutamyl-meso-2,6-diaminopimeloyl-D-alanyl-D-alanine + UDP-N-acetyl-alpha-D-glucosamine = di-trans,octa-cis-undecaprenyl diphospho-[N-acetyl-alpha-D-glucosaminyl-(1-&gt;4)]-N-acetyl-alpha-D-muramoyl-L-alanyl-D-glutamyl-meso-2,6-diaminopimeloyl-D-alanyl-D-alanine + UDP + H(+). It participates in cell wall biogenesis; peptidoglycan biosynthesis. Functionally, cell wall formation. Catalyzes the transfer of a GlcNAc subunit on undecaprenyl-pyrophosphoryl-MurNAc-pentapeptide (lipid intermediate I) to form undecaprenyl-pyrophosphoryl-MurNAc-(pentapeptide)GlcNAc (lipid intermediate II). This chain is UDP-N-acetylglucosamine--N-acetylmuramyl-(pentapeptide) pyrophosphoryl-undecaprenol N-acetylglucosamine transferase, found in Carboxydothermus hydrogenoformans (strain ATCC BAA-161 / DSM 6008 / Z-2901).